A 217-amino-acid polypeptide reads, in one-letter code: Probable nicotinate-nucleotide adenylyltransferase (217 aa).

Belongs to the NadD family.

The enzyme catalyses nicotinate beta-D-ribonucleotide + ATP + H(+) = deamido-NAD(+) + diphosphate. It functions in the pathway cofactor biosynthesis; NAD(+) biosynthesis; deamido-NAD(+) from nicotinate D-ribonucleotide: step 1/1. Its function is as follows. Catalyzes the reversible adenylation of nicotinate mononucleotide (NaMN) to nicotinic acid adenine dinucleotide (NaAD). The protein is Probable nicotinate-nucleotide adenylyltransferase of Dechloromonas aromatica (strain RCB).